Here is a 504-residue protein sequence, read N- to C-terminus: Glycerol kinase (504 aa).

Threonine 12 lines the ADP pocket. ATP is bound by residues threonine 12, threonine 13, and serine 14. Threonine 12 lines the sn-glycerol 3-phosphate pocket. Residue arginine 16 participates in ADP binding. The sn-glycerol 3-phosphate site is built by arginine 82, glutamate 83, tyrosine 134, and aspartate 246. 5 residues coordinate glycerol: arginine 82, glutamate 83, tyrosine 134, aspartate 246, and glutamine 247. ADP contacts are provided by threonine 268 and glycine 312. ATP is bound by residues threonine 268, glycine 312, glutamine 316, and glycine 413. Residues glycine 413 and asparagine 417 each coordinate ADP.

The protein belongs to the FGGY kinase family.

The enzyme catalyses glycerol + ATP = sn-glycerol 3-phosphate + ADP + H(+). It participates in polyol metabolism; glycerol degradation via glycerol kinase pathway; sn-glycerol 3-phosphate from glycerol: step 1/1. Its activity is regulated as follows. Inhibited by fructose 1,6-bisphosphate (FBP). Its function is as follows. Key enzyme in the regulation of glycerol uptake and metabolism. Catalyzes the phosphorylation of glycerol to yield sn-glycerol 3-phosphate. This is Glycerol kinase from Paenarthrobacter aurescens (strain TC1).